The chain runs to 308 residues: PAK4-inhibitor inka1 (308 aa).

The interval 81–105 (EEEESASDPSAVSSPSSERSLEFDS) is disordered. Low complexity predominate over residues 87–98 (SDPSAVSSPSSE). Inka box regions lie at residues 164–201 (DPED…DLPE) and 281–308 (DTDY…IGYI).

This sequence belongs to the INKA family. Interacts with pak4/pak5.

It localises to the nucleus. The protein resides in the cytoplasm. Functionally, inhibitor of the serine/threonine-protein kinase pak4/pak5. Acts by binding pak4/pak5 in a substrate-like manner, inhibiting the protein kinase activity. Required for the proper migration of neural crest cells during embryonic development, probably by inhibiting pak4/pak5. The protein is PAK4-inhibitor inka1 of Danio rerio (Zebrafish).